Reading from the N-terminus, the 235-residue chain is Ribosomal RNA small subunit methyltransferase G (235 aa).

S-adenosyl-L-methionine is bound by residues Gly75, Phe80, 126-127 (AE), and Arg145.

The protein belongs to the methyltransferase superfamily. RNA methyltransferase RsmG family.

It is found in the cytoplasm. In terms of biological role, specifically methylates the N7 position of a guanine in 16S rRNA. The chain is Ribosomal RNA small subunit methyltransferase G from Carboxydothermus hydrogenoformans (strain ATCC BAA-161 / DSM 6008 / Z-2901).